A 358-amino-acid chain; its full sequence is Probable branched-chain-amino-acid aminotransferase (358 aa).

Lysine 196 bears the N6-(pyridoxal phosphate)lysine mark.

The protein belongs to the class-IV pyridoxal-phosphate-dependent aminotransferase family. Pyridoxal 5'-phosphate serves as cofactor.

It carries out the reaction L-leucine + 2-oxoglutarate = 4-methyl-2-oxopentanoate + L-glutamate. It catalyses the reaction L-isoleucine + 2-oxoglutarate = (S)-3-methyl-2-oxopentanoate + L-glutamate. The catalysed reaction is L-valine + 2-oxoglutarate = 3-methyl-2-oxobutanoate + L-glutamate. Its pathway is amino-acid biosynthesis; L-isoleucine biosynthesis; L-isoleucine from 2-oxobutanoate: step 4/4. The protein operates within amino-acid biosynthesis; L-leucine biosynthesis; L-leucine from 3-methyl-2-oxobutanoate: step 4/4. It participates in amino-acid biosynthesis; L-valine biosynthesis; L-valine from pyruvate: step 4/4. In terms of biological role, acts on leucine, isoleucine and valine. The sequence is that of Probable branched-chain-amino-acid aminotransferase (ilvE) from Staphylococcus aureus (strain N315).